An 810-amino-acid polypeptide reads, in one-letter code: Phenylalanine--tRNA ligase beta subunit (810 aa).

The tRNA-binding domain occupies 40–153; that stretch reads KLPDQKVIVG…EACEIGQPLA (114 aa). One can recognise a B5 domain in the interval 399–480; it reads AAQKIVSLRP…RLYGYNNLEP (82 aa). The Mg(2+) site is built by D458, D464, E467, and E468. An FDX-ACB domain is found at 714–808; that stretch reads SKFPVVERDL…ARSELGAVIR (95 aa).

It belongs to the phenylalanyl-tRNA synthetase beta subunit family. Type 1 subfamily. As to quaternary structure, tetramer of two alpha and two beta subunits. Requires Mg(2+) as cofactor.

The protein localises to the cytoplasm. It catalyses the reaction tRNA(Phe) + L-phenylalanine + ATP = L-phenylalanyl-tRNA(Phe) + AMP + diphosphate + H(+). The chain is Phenylalanine--tRNA ligase beta subunit from Chlorobaculum tepidum (strain ATCC 49652 / DSM 12025 / NBRC 103806 / TLS) (Chlorobium tepidum).